The sequence spans 148 residues: Large ribosomal subunit protein bL9 (148 aa).

Belongs to the bacterial ribosomal protein bL9 family.

In terms of biological role, binds to the 23S rRNA. The polypeptide is Large ribosomal subunit protein bL9 (Ectopseudomonas mendocina (strain ymp) (Pseudomonas mendocina)).